Reading from the N-terminus, the 498-residue chain is Protein adenylyltransferase Fic (498 aa).

Residues 43–63 (FAFLAFLAGSFLAFSLHALIS) traverse the membrane as a helical segment. TPR repeat units lie at residues 126-159 (ALSSLRLAQDMYMAGKDDKAARLFEHALALAPRH) and 160-194 (PEVLLRYGEFLEHNQRNIVLADQYYFQALTINPSH). Residues 251–256 (SVGIEG) carry the Inhibitory (S/T)XXXE(G/N) motif motif. ATP is bound by residues Glu-255 and 336 to 339 (VGGH). A Fido domain is found at 305-440 (ITIKDILELH…IRPFVRFIAD (136 aa)). Residue His-383 is part of the active site. Residues 387-394 (DGNGRTSR), 419-420 (YY), and Asn-427 each bind ATP.

This sequence belongs to the fic family. In terms of assembly, homodimer.

The protein localises to the membrane. It catalyses the reaction L-tyrosyl-[protein] + ATP = O-(5'-adenylyl)-L-tyrosyl-[protein] + diphosphate. The catalysed reaction is L-threonyl-[protein] + ATP = 3-O-(5'-adenylyl)-L-threonyl-[protein] + diphosphate. It carries out the reaction 3-O-(5'-adenylyl)-L-threonyl-[protein] + H2O = L-threonyl-[protein] + AMP + H(+). Its activity is regulated as follows. The side chain of Glu-255 determines which of the two opposing activities (AMPylase or de-AMPylase) will take place. In response to endoplasmic reticulum stress, mediates de-AMPylase activity. Adenylyltransferase activity is inhibited by the inhibitory helix present at the N-terminus: Glu-255 binds ATP and competes with ATP-binding at Arg-394, thereby preventing adenylyltransferase activity. In unstressed cells, disengagement of Glu-255 promotes adenylyltransferase activity. Activation dissociates ATP-binding from Glu-255, allowing ordered binding of the entire ATP moiety with the alpha-phosphate in an orientation that is productive for accepting an incoming target hydroxyl side chain. Functionally, protein that can both mediate the addition of adenosine 5'-monophosphate (AMP) to specific residues of target proteins (AMPylation), and the removal of the same modification from target proteins (de-AMPylation), depending on the context. The side chain of Glu-255 determines which of the two opposing activities (AMPylase or de-AMPylase) will take place. Acts as a key regulator of the unfolded protein response (UPR) by mediating AMPylation or de-AMPylation of Hsc70-3/BiP. In unstressed cells, acts as an adenylyltransferase by mediating AMPylation of Hsc70-3/BiP at 'Thr-518', thereby inactivating it. In response to endoplasmic reticulum stress, acts as a phosphodiesterase by mediating removal of ATP (de-AMPylation) from Hsc70-3/BiP at 'Thr-518', leading to restore HSPA5/BiP activity. The chain is Protein adenylyltransferase Fic from Drosophila willistoni (Fruit fly).